The following is a 174-amino-acid chain: Achaete-scute homolog 3 (174 aa).

A basic motif region spans residues 92 to 105 (AFIRKRNERERQRV). Positions 92 to 144 (AFIRKRNERERQRVKCVNEGYARLRRHLPEDYLEKRLSKVETLRAAIKYISYL) constitute a bHLH domain. Residues 106 to 144 (KCVNEGYARLRRHLPEDYLEKRLSKVETLRAAIKYISYL) are helix-loop-helix motif. The tract at residues 153–174 (SETKKNPRTASCGSLDPALRVI) is disordered.

In terms of assembly, efficient DNA binding requires dimerization with another bHLH protein. In terms of tissue distribution, expressed in the salivary duct cells. Also expressed at lower levels in testis and epididymis. Expressed in the olfactory epithelium (OE), in a subset of apical microvillar cells.

It localises to the nucleus. Transcriptional repressor. Inhibits myogenesis. Plays a role in progenitor cells which differentiate into ductal and acinar, but not myoepithelial, cell lineages in the salivary glands. Involved in the functions of the microvillar cells and Bowman's glands and probably, in a non-cell-autonomous manner, in the development or regeneration of a complete olfactory epithelium (OE). The chain is Achaete-scute homolog 3 (Ascl3) from Mus musculus (Mouse).